The sequence spans 466 residues: Asparagine--tRNA ligase (466 aa).

This sequence belongs to the class-II aminoacyl-tRNA synthetase family. As to quaternary structure, homodimer.

It localises to the cytoplasm. It catalyses the reaction tRNA(Asn) + L-asparagine + ATP = L-asparaginyl-tRNA(Asn) + AMP + diphosphate + H(+). The polypeptide is Asparagine--tRNA ligase (Photobacterium profundum (strain SS9)).